Consider the following 174-residue polypeptide: Peptide deformylase (174 aa).

Residues Cys96 and His138 each coordinate Fe cation. Residue Glu139 is part of the active site. His142 lines the Fe cation pocket.

It belongs to the polypeptide deformylase family. Requires Fe(2+) as cofactor.

The catalysed reaction is N-terminal N-formyl-L-methionyl-[peptide] + H2O = N-terminal L-methionyl-[peptide] + formate. In terms of biological role, removes the formyl group from the N-terminal Met of newly synthesized proteins. Requires at least a dipeptide for an efficient rate of reaction. N-terminal L-methionine is a prerequisite for activity but the enzyme has broad specificity at other positions. This chain is Peptide deformylase, found in Helicobacter pylori (strain P12).